Consider the following 1293-residue polypeptide: MISLRGSAALSPFRIEKILAALKGSAPRITHLYAEFWHFAWSDQPLSEAQQEVLKQILTYGPRMSEEAPAGELFLVIPRPGTISPWSSRATDIARHCGIEAIQRLERGIAFYAATADGSPLTDAEKAALRPLIHDRMTEAVFASLTDAQKLYHTAEPAPLSTVDILSGGKAALEAANAEMGLALSPDEVDYLIENFQRMGRNPTDVELMMFAQANSEHCRHKIFNADWVIDGVAQAQSLFGMIRNTHKLNPGKTVVAYADNASIVEGGKTKRFYPLADGQYGFVEEDMHFLMKVETHNHPTAISPFAGAATGAGGEIRDEGATGSGSKPKAGLTGFSVSNLHIPGFKQPWEHNNGKPDRIASALQIMVDGPLGGAAYNNEFGRPNIAGYFRTLEIESAGEIRGYHKPIMLAGGVGNISARHAKKNPIPPGAALIQLGGPAMLIGLGGGAASSMDTGANTENLDFDSVQRGNPELERRAQEVIDRCWQLGDKNPILSIHDVGAGGISNAFPELVNDAGVGARFQLRDVHNEEPGMSPREIWSNEAQERYVMAVRKEDLPLFAEICERERCPFAVVGEATEEKRLVVSDRHFGNTPVDMDLSVLLGKPPKMTRDVQHVARELPAFDHSRIDLKEAAQRVLRLPGVADKTFLITIGDRSVTGMIARDQMVGPWQVPVADVAVTLDGFETYRGEAFAIGEKAPLALIDAPASGRMAIGEAITNIAASLIEDIADLKLSANWMAPAGHPGEDAALFDTVKAVGMELCPQLGISIPVGKDSMSMKTVWEERNEKKAVTAPISLVVTAFAPTADARKTLTPQLRTDLGDTRLLLIDLGAGRNRLGGSALAQVYGSVGNVAPDVEDADSLKHFFNAVQKLNREGRLLAYHDRSDGGLFATVVEMAFAGRTGLELDIASLGEDAVAVLYNEELGAVLQVRAADLDAITAELETTLRGKVHVIGAPASHGDIVIRQGTKLVFAESRVALHRAWSETTYQMQKLRDNPVCAQQEYDRLLDERDAGLHAKLTFDINENIAAPYIASGARPKMAILREQGVNGQVEMAAAFDRAGFNAFDVHMSDIISGRVSLKDFAGFVACGGFSYGDVLGAGEGWAKSILFNPRARDEFTAFFNRTDSFALGVCNGCQMMSNLHSIIPGAGHWPHFVRNRSEQFEARVAMVEVLDSPSLFFNGMAGSRMPIAVAHGEGYAEFADAAAQQRAQDARLVTLRYVDNSGLPTEVYPFNPNGSPQGITGLTTADGRFSIMMPHPERVFRTVQHSWHPDGWGEDGPWIRMFRNARKFIG.

ATP contacts are provided by residues Gly308–Asp319 and Ala675. The Mg(2+) site is built by Asp676, Glu715, Asn719, and Asp883. Ser885 provides a ligand contact to ATP. The Glutamine amidotransferase type-1 domain maps to Met1040 to Gly1293. Cys1133 serves as the catalytic Nucleophile. Catalysis depends on residues His1258 and Glu1260.

The protein in the N-terminal section; belongs to the FGAMS family. In terms of assembly, monomer.

The protein localises to the cytoplasm. It carries out the reaction N(2)-formyl-N(1)-(5-phospho-beta-D-ribosyl)glycinamide + L-glutamine + ATP + H2O = 2-formamido-N(1)-(5-O-phospho-beta-D-ribosyl)acetamidine + L-glutamate + ADP + phosphate + H(+). It participates in purine metabolism; IMP biosynthesis via de novo pathway; 5-amino-1-(5-phospho-D-ribosyl)imidazole from N(2)-formyl-N(1)-(5-phospho-D-ribosyl)glycinamide: step 1/2. Functionally, phosphoribosylformylglycinamidine synthase involved in the purines biosynthetic pathway. Catalyzes the ATP-dependent conversion of formylglycinamide ribonucleotide (FGAR) and glutamine to yield formylglycinamidine ribonucleotide (FGAM) and glutamate. In Methylobacillus flagellatus (strain ATCC 51484 / DSM 6875 / VKM B-1610 / KT), this protein is Phosphoribosylformylglycinamidine synthase.